Here is a 1239-residue protein sequence, read N- to C-terminus: Inner tegument protein (1239 aa).

4 disordered regions span residues 1-20, 669-704, 959-980, and 1087-1239; these read MASA…DAQP, GESP…GGGP, RPPP…DTPP, and GRNA…AEDE. Residues 615-1239 form an interaction with large tegument protein region; the sequence is NELPKTRSLA…RPPRPTAEDE (625 aa). Positions 1112-1123 are enriched in low complexity; that stretch reads DSSPFSFSSSDF. Gly residues predominate over residues 1139 to 1148; the sequence is VPGGGGGGEG. The segment covering 1151–1170 has biased composition (basic and acidic residues); it reads EEERERPSDIDTAARARKVE. The segment covering 1180-1189 has biased composition (low complexity); it reads RTTPSPSRRA. Residues 1219 to 1232 show a composition bias toward basic residues; that stretch reads VRPRTRRGATRRPP.

Belongs to the herpesviridae inner tegument protein family. As to quaternary structure, interacts (via C-terminus) with the large tegument protein/LTP (via N-terminus).

The protein localises to the virion tegument. It localises to the host cytoplasm. It is found in the host nucleus. The protein resides in the host Golgi apparatus. Its subcellular location is the host trans-Golgi network. In terms of biological role, plays an essential role in cytoplasmic secondary envelopment during viral egress. Interacts with the capsid via the large tegument protein/LTP and participates in its transport to the host trans-Golgi network (TGN) where secondary envelopment occurs. Modulates tegumentation and capsid accumulation at the viral assembly complex. The chain is Inner tegument protein from Homo sapiens (Human).